Reading from the N-terminus, the 301-residue chain is Lipoyl synthase (301 aa).

7 residues coordinate [4Fe-4S] cluster: C37, C42, C48, C63, C67, C70, and S276. Residues 49-265 (WSKKHATVMI…ERIARTKGFL (217 aa)) form the Radical SAM core domain.

It belongs to the radical SAM superfamily. Lipoyl synthase family. It depends on [4Fe-4S] cluster as a cofactor.

The protein resides in the cytoplasm. It catalyses the reaction [[Fe-S] cluster scaffold protein carrying a second [4Fe-4S](2+) cluster] + N(6)-octanoyl-L-lysyl-[protein] + 2 oxidized [2Fe-2S]-[ferredoxin] + 2 S-adenosyl-L-methionine + 4 H(+) = [[Fe-S] cluster scaffold protein] + N(6)-[(R)-dihydrolipoyl]-L-lysyl-[protein] + 4 Fe(3+) + 2 hydrogen sulfide + 2 5'-deoxyadenosine + 2 L-methionine + 2 reduced [2Fe-2S]-[ferredoxin]. The protein operates within protein modification; protein lipoylation via endogenous pathway; protein N(6)-(lipoyl)lysine from octanoyl-[acyl-carrier-protein]: step 2/2. In terms of biological role, catalyzes the radical-mediated insertion of two sulfur atoms into the C-6 and C-8 positions of the octanoyl moiety bound to the lipoyl domains of lipoate-dependent enzymes, thereby converting the octanoylated domains into lipoylated derivatives. This is Lipoyl synthase from Rickettsia felis (strain ATCC VR-1525 / URRWXCal2) (Rickettsia azadi).